The primary structure comprises 247 residues: Carboxy-S-adenosyl-L-methionine synthase (247 aa).

S-adenosyl-L-methionine contacts are provided by residues Y39, 64 to 66 (GCS), 89 to 90 (DN), 117 to 118 (DI), N132, and R199.

The protein belongs to the class I-like SAM-binding methyltransferase superfamily. Cx-SAM synthase family. Homodimer.

It catalyses the reaction prephenate + S-adenosyl-L-methionine = carboxy-S-adenosyl-L-methionine + 3-phenylpyruvate + H2O. Catalyzes the conversion of S-adenosyl-L-methionine (SAM) to carboxy-S-adenosyl-L-methionine (Cx-SAM). The chain is Carboxy-S-adenosyl-L-methionine synthase from Escherichia coli (strain K12 / MC4100 / BW2952).